Consider the following 167-residue polypeptide: Small ribosomal subunit protein uS5 (167 aa).

The S5 DRBM domain maps to 19-82 (LTEKVLHINR…EAARKNMISC (64 aa)).

Belongs to the universal ribosomal protein uS5 family. In terms of assembly, part of the 30S ribosomal subunit. Contacts proteins S4 and S8.

With S4 and S12 plays an important role in translational accuracy. Functionally, located at the back of the 30S subunit body where it stabilizes the conformation of the head with respect to the body. The polypeptide is Small ribosomal subunit protein uS5 (Protochlamydia amoebophila (strain UWE25)).